A 289-amino-acid polypeptide reads, in one-letter code: Cysteine-rich venom protein Mr30 (289 aa).

The signal sequence occupies residues 1 to 24 (MLSTMQTVGAILMLSIVFVAGTKR). Position 33 is a 4-carboxyglutamate (Glu33). The region spanning 62-184 (VRMHNVIRAT…GEDRYFVCNY (123 aa)) is the SCP domain.

It belongs to the CRISP family. In terms of processing, contains 11 disulfide bonds. Expressed by the venom duct.

It is found in the secreted. In terms of biological role, has no proteolytic activity. The chain is Cysteine-rich venom protein Mr30 from Conus marmoreus (Marble cone).